Reading from the N-terminus, the 337-residue chain is Cobalt-precorrin-5B C(1)-methyltransferase (337 aa).

This sequence belongs to the CbiD family.

The enzyme catalyses Co-precorrin-5B + S-adenosyl-L-methionine = Co-precorrin-6A + S-adenosyl-L-homocysteine. Its pathway is cofactor biosynthesis; adenosylcobalamin biosynthesis; cob(II)yrinate a,c-diamide from sirohydrochlorin (anaerobic route): step 6/10. Functionally, catalyzes the methylation of C-1 in cobalt-precorrin-5B to form cobalt-precorrin-6A. The sequence is that of Cobalt-precorrin-5B C(1)-methyltransferase from Methanoculleus marisnigri (strain ATCC 35101 / DSM 1498 / JR1).